The sequence spans 520 residues: Tetratricopeptide repeat protein 6 (520 aa).

TPR repeat units lie at residues 57–90 (MTMC…ISHS), 101–138 (ADCL…DKNS), 139–172 (YTAF…DATE), 176–209 (LNTF…SRTN), 210–243 (GSLC…NPCF), 245–280 (DAYV…NPAY), 281–314 (IKAR…DPKN), 320–347 (GRAV…ISTT), 348–381 (AEFL…NPKY), 382–415 (SLAY…DPEN), 416–449 (EYVL…CPFW), 450–483 (AAVY…KPND), and 484–517 (ALVY…EDYA).

This chain is Tetratricopeptide repeat protein 6, found in Homo sapiens (Human).